Consider the following 563-residue polypeptide: Tripeptidyl-peptidase 1 (563 aa).

Residues 1-19 (MGLQACLLGLFALILSGKC) form the signal peptide. A propeptide spans 20-195 (SYSPEPDQRR…PEPQVTGTVG (176 aa)) (removed in mature form). An intrachain disulfide couples Cys111 to Cys122. The Peptidase S53 domain occupies 199–563 (GVTPSVIRKR…PALLKTLLNP (365 aa)). Residues Asn210 and Asn222 are each glycosylated (N-linked (GlcNAc...) asparagine). Active-site charge relay system residues include Glu272 and Asp276. Asn286, Asn313, and Asn443 each carry an N-linked (GlcNAc...) asparagine glycan. 2 cysteine pairs are disulfide-bonded: Cys365-Cys526 and Cys522-Cys537. Residue Ser475 is the Charge relay system of the active site. Asp517 and Val518 together coordinate Ca(2+). Gly539, Gly541, and Asp543 together coordinate Ca(2+).

Monomer. Interacts with CLN5. Interacts with CLN3. Ca(2+) is required as a cofactor. Activated by autocatalytic proteolytical processing upon acidification. N-glycosylation is required for processing and activity.

Its subcellular location is the lysosome. It is found in the melanosome. It catalyses the reaction Release of an N-terminal tripeptide from a polypeptide, but also has endopeptidase activity.. Its function is as follows. Lysosomal serine protease with tripeptidyl-peptidase I activity. May act as a non-specific lysosomal peptidase which generates tripeptides from the breakdown products produced by lysosomal proteinases. Requires substrates with an unsubstituted N-terminus. This chain is Tripeptidyl-peptidase 1 (TPP1), found in Macaca fascicularis (Crab-eating macaque).